Consider the following 368-residue polypeptide: SH3 domain-containing protein 2 (368 aa).

Coiled-coil stretches lie at residues 1–21 (MDAI…QQQA) and 146–210 (LEDA…LGKE). Residues 1-264 (MDAIRKQASR…MVSERQRIEA (264 aa)) form the BAR domain. The interval 258-281 (ERQRIEAPSTPSSADSMPPPPSYE) is disordered. The SH3 domain occupies 299-358 (MGYFLGEVLFPYHGVTDVELSLSTGEYVVVRKVTGSGWAEGECKGKAGWFPYGYIERRER).

In terms of assembly, homodimer. Interacts with FREE1. Interacts (via SH3 domain) with ATG8E and ATG8F. Component of a phosphoinositide 3-kinase (PI3K) complex containing ATG6, SH3P2 and FREE1. Binds to SH3P3 and DRP1A. Forms a complex made of SH3P2 and DRP1A and triggers its accumulation at the cell plate. As to expression, highly expressed in seedlings. Detected in flowers, leaves and stems.

It localises to the cytoplasm. Its subcellular location is the cytoplasmic vesicle. The protein resides in the clathrin-coated vesicle. The protein localises to the cell membrane. It is found in the late endosome. It localises to the autophagosome membrane. Regulator for autophaosome formation and/or maturation. Binds phosphatidylinositol-phosphate; highest affinity for vesicles containing PtdIns(3,4,5)P(3), followed by those containing PtdIns(4,5)P(2) and PtdIns(3,4)P(2), with minimal binding to phosphatidylinositol monophosphates, including PtdIns(3)P. Together with DRP1A, converts the fused vesicles to tubular structures at the cell plate during cytokinesis. In Arabidopsis thaliana (Mouse-ear cress), this protein is SH3 domain-containing protein 2.